Here is a 391-residue protein sequence, read N- to C-terminus: uncharacterized protein (391 aa).

Belongs to the mycobacterial PPE family.

This is an uncharacterized protein from Mycobacterium tuberculosis (strain CDC 1551 / Oshkosh).